Reading from the N-terminus, the 270-residue chain is MNFGKKVWLIGNSSEKSKKILNKLSKILKAEHFVFDDINPEIVISVGGDGTLLRAMHMYEYQLDRVRFLGVHTGHLGFYTDFTDEDLFEVVEALYDENPAQAIHYPLIRVQVSFTDGYQIVRHVLNEATIRRASKTMVGDVRISDYLFERFRGDGLSISTPTGSTAYNKSIGGAVVHPRVKAMQIAEIASLNNVVYRTLGSPMIVAEKDTITVCPAPEDDYSLTFDQLTFEYKNIKSIEFSLDGTTISFANCAHTPFWERVSKSFIGEVE.

The Proton acceptor role is filled by D49. Residues 49-50, R54, 126-127, R152, D154, 165-170, A189, and Q227 contribute to the NAD(+) site; these read DG, NE, and TAYNKS.

This sequence belongs to the NAD kinase family. A divalent metal cation is required as a cofactor.

It is found in the cytoplasm. It carries out the reaction NAD(+) + ATP = ADP + NADP(+) + H(+). Involved in the regulation of the intracellular balance of NAD and NADP, and is a key enzyme in the biosynthesis of NADP. Catalyzes specifically the phosphorylation on 2'-hydroxyl of the adenosine moiety of NAD to yield NADP. This is NAD kinase from Lactococcus lactis subsp. cremoris (strain SK11).